A 62-amino-acid chain; its full sequence is Temporin-1PLa (62 aa).

Residues 1 to 22 (MFTSKKSLLLLFFLGTINLSLC) form the signal peptide. Residues 23 to 45 (EEERDADEEERRDDPDEMNVEVE) constitute a propeptide that is removed on maturation. The residue at position 60 (Ile-60) is an Isoleucine amide.

As to expression, expressed by the skin glands.

It localises to the secreted. Antimicrobial activity against the Gram-positive bacterium S.aureus. The chain is Temporin-1PLa from Lithobates palustris (Pickerel frog).